Here is a 228-residue protein sequence, read N- to C-terminus: Probable endo-1,4-beta-xylanase A (228 aa).

The first 18 residues, 1-18, serve as a signal peptide directing secretion; that stretch reads MVSFSYLLLACSAIGALA. N-linked (GlcNAc...) asparagine glycosylation occurs at asparagine 29. Residues 40–228 enclose the GH11 domain; that stretch reads AGTPSSTGWN…SSGSASITVY (189 aa). The active-site Nucleophile is glutamate 124. Glutamate 215 functions as the Proton donor in the catalytic mechanism.

Belongs to the glycosyl hydrolase 11 (cellulase G) family.

It is found in the secreted. It catalyses the reaction Endohydrolysis of (1-&gt;4)-beta-D-xylosidic linkages in xylans.. It participates in glycan degradation; xylan degradation. Functionally, endo-1,4-beta-xylanase involved in the hydrolysis of xylan, a major structural heterogeneous polysaccharide found in plant biomass representing the second most abundant polysaccharide in the biosphere, after cellulose. The sequence is that of Probable endo-1,4-beta-xylanase A (xlnA) from Aspergillus fumigatus (strain CBS 144.89 / FGSC A1163 / CEA10) (Neosartorya fumigata).